The chain runs to 317 residues: Protoheme IX farnesyltransferase (317 aa).

Helical transmembrane passes span 33 to 53 (VMSL…GEIN), 54 to 74 (PILG…SGAL), 117 to 137 (VILG…TIFF), 154 to 174 (IVIG…CVTG), 181 to 201 (VILF…LALF), 242 to 262 (FFTG…SAIF), and 285 to 305 (MFAY…ADHF).

This sequence belongs to the UbiA prenyltransferase family. Protoheme IX farnesyltransferase subfamily.

The protein resides in the cell inner membrane. It catalyses the reaction heme b + (2E,6E)-farnesyl diphosphate + H2O = Fe(II)-heme o + diphosphate. The protein operates within porphyrin-containing compound metabolism; heme O biosynthesis; heme O from protoheme: step 1/1. In terms of biological role, converts heme B (protoheme IX) to heme O by substitution of the vinyl group on carbon 2 of heme B porphyrin ring with a hydroxyethyl farnesyl side group. This is Protoheme IX farnesyltransferase from Agrobacterium fabrum (strain C58 / ATCC 33970) (Agrobacterium tumefaciens (strain C58)).